Reading from the N-terminus, the 484-residue chain is Glutamyl-tRNA(Gln) amidotransferase subunit A (484 aa).

Active-site charge relay system residues include Lys77 and Ser152. The active-site Acyl-ester intermediate is Ser176.

The protein belongs to the amidase family. GatA subfamily. In terms of assembly, heterotrimer of A, B and C subunits.

It carries out the reaction L-glutamyl-tRNA(Gln) + L-glutamine + ATP + H2O = L-glutaminyl-tRNA(Gln) + L-glutamate + ADP + phosphate + H(+). Functionally, allows the formation of correctly charged Gln-tRNA(Gln) through the transamidation of misacylated Glu-tRNA(Gln) in organisms which lack glutaminyl-tRNA synthetase. The reaction takes place in the presence of glutamine and ATP through an activated gamma-phospho-Glu-tRNA(Gln). This chain is Glutamyl-tRNA(Gln) amidotransferase subunit A, found in Pseudomonas aeruginosa (strain LESB58).